Here is a 188-residue protein sequence, read N- to C-terminus: FMN-dependent NADPH-azoreductase (188 aa).

It belongs to the azoreductase type 2 family. As to quaternary structure, homotetramer. The cofactor is FMN.

Catalyzes the reductive cleavage of azo bond in aromatic azo compounds to the corresponding amines. Requires NADPH, but not NADH, as an electron donor for its activity. The polypeptide is FMN-dependent NADPH-azoreductase (azo1) (Staphylococcus aureus (strain MSSA476)).